Reading from the N-terminus, the 197-residue chain is Isopentenyl-diphosphate Delta-isomerase (197 aa).

Mn(2+) contacts are provided by histidine 41 and histidine 48. The region spanning 46–183 (QLHRAFSVFL…SWFMTVLDAA (138 aa)) is the Nudix hydrolase domain. Residue cysteine 83 is part of the active site. Cysteine 83 is a binding site for Mg(2+). Histidine 85 provides a ligand contact to Mn(2+). Glutamate 103 provides a ligand contact to Mg(2+). The Mn(2+) site is built by glutamate 130 and glutamate 132. Glutamate 132 is an active-site residue.

Belongs to the IPP isomerase type 1 family. The cofactor is Mg(2+). Requires Mn(2+) as cofactor.

It localises to the cytoplasm. It catalyses the reaction isopentenyl diphosphate = dimethylallyl diphosphate. It functions in the pathway isoprenoid biosynthesis; dimethylallyl diphosphate biosynthesis; dimethylallyl diphosphate from isopentenyl diphosphate: step 1/1. Catalyzes the 1,3-allylic rearrangement of the homoallylic substrate isopentenyl (IPP) to its highly electrophilic allylic isomer, dimethylallyl diphosphate (DMAPP). The chain is Isopentenyl-diphosphate Delta-isomerase from Streptomyces avermitilis (strain ATCC 31267 / DSM 46492 / JCM 5070 / NBRC 14893 / NCIMB 12804 / NRRL 8165 / MA-4680).